Reading from the N-terminus, the 190-residue chain is Translation initiation factor IF-3 (190 aa).

The protein belongs to the IF-3 family. In terms of assembly, monomer.

The protein localises to the cytoplasm. In terms of biological role, IF-3 binds to the 30S ribosomal subunit and shifts the equilibrium between 70S ribosomes and their 50S and 30S subunits in favor of the free subunits, thus enhancing the availability of 30S subunits on which protein synthesis initiation begins. The protein is Translation initiation factor IF-3 of Prochlorococcus marinus subsp. pastoris (strain CCMP1986 / NIES-2087 / MED4).